The following is a 163-amino-acid chain: MTSIAISSGSFDPITLGHLDIIKRGAKVFDEVYVVVLNNSSKKPFFSVEERLELIREATKDIPNVKVDSHSGLLVEYAKMRNANAILRGLRAVSDFEYEMQITSMNRKLDENIETFFIMTNNQYSFLSSSIVKEVARYGGSVVDLVPPIVERALKEKFQTPLK.

Ser10 is a binding site for substrate. ATP-binding positions include 10–11 (SF) and His18. Residues Lys42, Leu74, and Arg88 each coordinate substrate. ATP is bound by residues 89-91 (GLR), Glu99, and 124-130 (YSFLSSS).

Belongs to the bacterial CoaD family. In terms of assembly, homohexamer. Mg(2+) serves as cofactor.

The protein resides in the cytoplasm. It carries out the reaction (R)-4'-phosphopantetheine + ATP + H(+) = 3'-dephospho-CoA + diphosphate. It participates in cofactor biosynthesis; coenzyme A biosynthesis; CoA from (R)-pantothenate: step 4/5. In terms of biological role, reversibly transfers an adenylyl group from ATP to 4'-phosphopantetheine, yielding dephospho-CoA (dPCoA) and pyrophosphate. In Bacillus cereus (strain G9842), this protein is Phosphopantetheine adenylyltransferase.